The chain runs to 456 residues: Phosphomethylpyrimidine synthase (456 aa).

Residues Asn-80, Met-109, Tyr-139, His-175, 195–197 (SRG), 236–239 (DSLR), and Glu-275 each bind substrate. His-279 serves as a coordination point for Zn(2+). Tyr-302 provides a ligand contact to substrate. Position 343 (His-343) interacts with Zn(2+). [4Fe-4S] cluster-binding residues include Cys-423, Cys-426, and Cys-431.

This sequence belongs to the ThiC family. It depends on [4Fe-4S] cluster as a cofactor.

The enzyme catalyses 5-amino-1-(5-phospho-beta-D-ribosyl)imidazole + S-adenosyl-L-methionine = 4-amino-2-methyl-5-(phosphooxymethyl)pyrimidine + CO + 5'-deoxyadenosine + formate + L-methionine + 3 H(+). The protein operates within cofactor biosynthesis; thiamine diphosphate biosynthesis. In terms of biological role, catalyzes the synthesis of the hydroxymethylpyrimidine phosphate (HMP-P) moiety of thiamine from aminoimidazole ribotide (AIR) in a radical S-adenosyl-L-methionine (SAM)-dependent reaction. The protein is Phosphomethylpyrimidine synthase of Synechococcus sp. (strain ATCC 27144 / PCC 6301 / SAUG 1402/1) (Anacystis nidulans).